We begin with the raw amino-acid sequence, 101 residues long: Putative pterin-4-alpha-carbinolamine dehydratase (101 aa).

This sequence belongs to the pterin-4-alpha-carbinolamine dehydratase family.

It catalyses the reaction (4aS,6R)-4a-hydroxy-L-erythro-5,6,7,8-tetrahydrobiopterin = (6R)-L-erythro-6,7-dihydrobiopterin + H2O. In Rhodopseudomonas palustris (strain HaA2), this protein is Putative pterin-4-alpha-carbinolamine dehydratase.